The following is a 438-amino-acid chain: V-type ATP synthase beta chain (438 aa).

This sequence belongs to the ATPase alpha/beta chains family.

Produces ATP from ADP in the presence of a proton gradient across the membrane. The V-type beta chain is a regulatory subunit. This is V-type ATP synthase beta chain from Chlamydia abortus (strain DSM 27085 / S26/3) (Chlamydophila abortus).